Reading from the N-terminus, the 310-residue chain is MSEDAVKNAILIAGPTASGKSALAIRMAKATGGFIVNTDSMQVYGVLDLLTARPSRADLAEAEHFLYGHVPPSSTYSTGKWFEDVEALLGRCGLQGRVPIFVGGTGLYFRALLGGLSQMPEVSAQVRDHWRGRMEAEGAKALHAVLCVRDPAIAAALQPSDSQRIVRALEVLESTGKSLLEWQKVKGRALVDDQSAQKIVLRPDRAWLGERIARRFSAMWAEGAIDEVRALLALDLDPALPAMKAIGVREVSAFLAETMSREEAIERSVIATRQYAKRQSTWFRNQLGEDWRVYASGEEVFQGGSFRDPQ.

Residue 14–21 (GPTASGKS) participates in ATP binding. Residue 16–21 (TASGKS) participates in substrate binding. Interaction with substrate tRNA regions lie at residues 39–42 (DSMQ) and 163–167 (QRIVR).

This sequence belongs to the IPP transferase family. Monomer. Mg(2+) serves as cofactor.

The catalysed reaction is adenosine(37) in tRNA + dimethylallyl diphosphate = N(6)-dimethylallyladenosine(37) in tRNA + diphosphate. In terms of biological role, catalyzes the transfer of a dimethylallyl group onto the adenine at position 37 in tRNAs that read codons beginning with uridine, leading to the formation of N6-(dimethylallyl)adenosine (i(6)A). The protein is tRNA dimethylallyltransferase of Brucella suis biovar 1 (strain 1330).